The primary structure comprises 79 residues: Sulfur carrier protein TusA (79 aa).

Catalysis depends on Cys17, which acts as the Cysteine persulfide intermediate.

This sequence belongs to the sulfur carrier protein TusA family.

Its subcellular location is the cytoplasm. Functionally, sulfur carrier protein which probably makes part of a sulfur-relay system. This is Sulfur carrier protein TusA from Actinobacillus succinogenes (strain ATCC 55618 / DSM 22257 / CCUG 43843 / 130Z).